A 630-amino-acid chain; its full sequence is Chaperone protein HtpG (630 aa).

Positions 1–341 (MTQNATSETL…SADLPLNVSR (341 aa)) are a; substrate-binding. A b region spans residues 342 to 558 (EILQESRDVR…QNDLSPHLLR (217 aa)). Residues 559-630 (MLKAAGQEVP…KRLNALLLKV (72 aa)) are c.

Belongs to the heat shock protein 90 family. As to quaternary structure, homodimer.

It localises to the cytoplasm. In terms of biological role, molecular chaperone. Has ATPase activity. The protein is Chaperone protein HtpG of Bordetella avium (strain 197N).